A 79-amino-acid polypeptide reads, in one-letter code: Hemoglobin subunit zeta (79 aa).

Position 1 is an N-acetylserine (serine 1). One can recognise a Globin domain in the interval 1-79; sequence SLTKTXXTII…FKLLSHXFLV (79 aa). Serine 38 and serine 53 each carry phosphoserine. Residue histidine 59 coordinates heme b.

The protein belongs to the globin family. Heterotetramer of two zeta chains and two epsilon chains.

Its function is as follows. The zeta chain is an alpha-type chain of mammalian embryonic hemoglobin. The protein is Hemoglobin subunit zeta of Notamacropus eugenii (Tammar wallaby).